The following is a 246-amino-acid chain: E3 ubiquitin ligase TRIM40 (246 aa).

The RING-type zinc-finger motif lies at 12 to 55; sequence CPICLDPLKEAVSTDCRHLFCRMCLTQHMDKASVSGILSCPVCR. A B box-type zinc finger spans residues 64-105; the sequence is GDNYICHTHQKRVRRFCEASGHLLCEECLQSPEHQSHTELSI. Zn(2+)-binding residues include cysteine 69, histidine 72, cysteine 91, and histidine 97. Residues 105-170 are a coiled coil; sequence IENAISHYKE…DQTKEQLKAL (66 aa).

It belongs to the TRIM/RBCC family. As to quaternary structure, interacts with NEDD8.

The enzyme catalyses S-ubiquitinyl-[E2 ubiquitin-conjugating enzyme]-L-cysteine + [acceptor protein]-L-lysine = [E2 ubiquitin-conjugating enzyme]-L-cysteine + N(6)-ubiquitinyl-[acceptor protein]-L-lysine.. Its function is as follows. E3 ubiquitin-protein ligase that plays a role in the limitation of the innate immune response. Mediates inhibition of the RLR signaling pathway by ubiquitinating RIGI and IFIH1 receptors, leading to their proteasomal degradation. Also promotes the neddylation of IKBKG/NEMO, stabilizing NFKBIA, and thereby inhibiting of NF-kappa-B nuclear translocation and activation. The polypeptide is E3 ubiquitin ligase TRIM40 (Trim40) (Mus musculus (Mouse)).